A 122-amino-acid chain; its full sequence is Large ribosomal subunit protein uL14 (122 aa).

The protein belongs to the universal ribosomal protein uL14 family. As to quaternary structure, part of the 50S ribosomal subunit. Forms a cluster with proteins L3 and L19. In the 70S ribosome, L14 and L19 interact and together make contacts with the 16S rRNA in bridges B5 and B8.

In terms of biological role, binds to 23S rRNA. Forms part of two intersubunit bridges in the 70S ribosome. In Herminiimonas arsenicoxydans, this protein is Large ribosomal subunit protein uL14.